We begin with the raw amino-acid sequence, 334 residues long: Putative transport protein MTH_1211 (334 aa).

The next 8 helical transmembrane spans lie at 24-44 (AIVV…AYIV), 60-80 (VSII…LVFT), 84-104 (IINS…PGAG), 131-151 (YVVA…VFLS), 189-209 (VLLS…LMAA), 220-240 (AILL…GPWA), 255-275 (ILRG…DIYL), and 289-309 (MIFL…GFIV).

It belongs to the autoinducer-2 exporter (AI-2E) (TC 2.A.86) family.

It localises to the cell membrane. The polypeptide is Putative transport protein MTH_1211 (Methanothermobacter thermautotrophicus (strain ATCC 29096 / DSM 1053 / JCM 10044 / NBRC 100330 / Delta H) (Methanobacterium thermoautotrophicum)).